Consider the following 363-residue polypeptide: Dihydroorotate dehydrogenase (quinone) (363 aa).

Residues 62 to 66 and Thr86 each bind FMN; that span reads AGYDK. A substrate-binding site is contributed by Lys66. Residue 111–115 participates in substrate binding; the sequence is NRLGF. FMN-binding residues include Asn140 and Asn171. Asn171 contacts substrate. Ser174 acts as the Nucleophile in catalysis. A substrate-binding site is contributed by Asn176. FMN-binding residues include Lys216 and Ser244. 245–246 provides a ligand contact to substrate; the sequence is NT. FMN-binding positions include Gly267, Gly296, and 317-318; that span reads YS.

It belongs to the dihydroorotate dehydrogenase family. Type 2 subfamily. Monomer. FMN is required as a cofactor.

The protein resides in the cell membrane. It catalyses the reaction (S)-dihydroorotate + a quinone = orotate + a quinol. It participates in pyrimidine metabolism; UMP biosynthesis via de novo pathway; orotate from (S)-dihydroorotate (quinone route): step 1/1. Its function is as follows. Catalyzes the conversion of dihydroorotate to orotate with quinone as electron acceptor. This chain is Dihydroorotate dehydrogenase (quinone), found in Allorhizobium ampelinum (strain ATCC BAA-846 / DSM 112012 / S4) (Agrobacterium vitis (strain S4)).